An 86-amino-acid polypeptide reads, in one-letter code: Small ribosomal subunit protein bS20 (86 aa).

The disordered stretch occupies residues 1–25 (MANIKSQMKRIKTNEANRQRNKAVK).

The protein belongs to the bacterial ribosomal protein bS20 family.

Its function is as follows. Binds directly to 16S ribosomal RNA. This is Small ribosomal subunit protein bS20 from Saccharopolyspora erythraea (strain ATCC 11635 / DSM 40517 / JCM 4748 / NBRC 13426 / NCIMB 8594 / NRRL 2338).